Here is a 221-residue protein sequence, read N- to C-terminus: MNYKVVEKFVSINGEGLKSGQLSVFIRFAGCNLNCNYCDTKWANEKDVKYTLMTEKEILSYIKETGVKNVTLTGGEPLLQDGIVELLNLLSLDSTLRVEIETNGSVSLENFLNFKNAPSFTMDYKLPDSSMENFMKTSNFKFLNKKDVIKFVVSSLKDLKKAMDIITEFNLSKKTNIYISPVFGRISPETIVDFMKDNKLNDVTLQIQIHKIIWNPNKRGV.

Substrate-binding positions include 12–14 (ING) and arginine 27. Residues 18–216 (KSGQLSVFIR…IQIHKIIWNP (199 aa)) form the Radical SAM core domain. The [4Fe-4S] cluster site is built by cysteine 31, cysteine 35, and cysteine 38. Mg(2+) is bound at residue threonine 40. Threonine 73 is a binding site for substrate. Glycine 75 contacts S-adenosyl-L-methionine.

It belongs to the radical SAM superfamily. 7-carboxy-7-deazaguanine synthase family. As to quaternary structure, homodimer. The cofactor is [4Fe-4S] cluster. S-adenosyl-L-methionine is required as a cofactor. Mg(2+) serves as cofactor.

The catalysed reaction is 6-carboxy-5,6,7,8-tetrahydropterin + H(+) = 7-carboxy-7-deazaguanine + NH4(+). It functions in the pathway purine metabolism; 7-cyano-7-deazaguanine biosynthesis. In terms of biological role, catalyzes the complex heterocyclic radical-mediated conversion of 6-carboxy-5,6,7,8-tetrahydropterin (CPH4) to 7-carboxy-7-deazaguanine (CDG), a step common to the biosynthetic pathways of all 7-deazapurine-containing compounds. The protein is 7-carboxy-7-deazaguanine synthase of Clostridium acetobutylicum (strain ATCC 824 / DSM 792 / JCM 1419 / IAM 19013 / LMG 5710 / NBRC 13948 / NRRL B-527 / VKM B-1787 / 2291 / W).